The sequence spans 1529 residues: ATP-dependent permease PDR15 (1529 aa).

Over residues 1-13 the composition is skewed to basic and acidic residues; sequence MSSDIRDVEERNS. Residues 1 to 38 are disordered; the sequence is MSSDIRDVEERNSRSSSSSSSSNSAAQSIGQHPYRGFD. The Cytoplasmic portion of the chain corresponds to 1-531; sequence MSSDIRDVEE…NFWRMKQSAS (531 aa). Residues 14 to 24 show a composition bias toward low complexity; it reads RSSSSSSSSNS. The ABC transporter 1 domain occupies 171–420; the sequence is LRLLKPSKEE…FQDMGYYCPP (250 aa). The helical transmembrane segment at 532–552 threads the bilayer; sequence VTLWQVIGNSVMAFILGSMFY. Over 553–567 the chain is Extracellular; it reads KVMKKNDTSTFYFRG. The N-linked (GlcNAc...) asparagine glycan is linked to Asn-558. A helical transmembrane segment spans residues 568–588; it reads AAMFFAILFNAFSCLLEIFSL. Residues 589 to 617 are Cytoplasmic-facing; it reads YETRPITEKHRTYSLYHPSADAFASVLSE. Residues 618-638 traverse the membrane as a helical segment; that stretch reads MPPKLITAVCFNIIFYFLVDF. Residues 639–642 are Extracellular-facing; sequence RRNG. Residues 643–663 form a helical membrane-spanning segment; the sequence is GVFFFYFLINVIATFTLSHLF. At 664-699 the chain is on the cytoplasmic side; that stretch reads RCVGSLTKTLQEAMVPASMLLLAISMYTGFAIPKTK. The chain crosses the membrane as a helical span at residues 700-720; the sequence is ILGWSIWIWYINPLAYLFESL. At 721–783 the chain is on the extracellular side; sequence MINEFHDRRF…YDYEHKHKWR (63 aa). N-linked (GlcNAc...) asparagine glycosylation is present at Asn-744. A helical transmembrane segment spans residues 784-804; it reads GFGIGMAYVVFFFFVYLILCE. The Cytoplasmic segment spans residues 805 to 1219; sequence YNEGAKQKGE…LFQQYWRSPD (415 aa). The span at 829–840 shows a compositional bias: basic and acidic residues; that stretch reads EGKLQEKHRPGD. The interval 829 to 873 is disordered; it reads EGKLQEKHRPGDIENNAGSSPDSATTEKKILDDSSEGSDSSSDNA. One can recognise an ABC transporter 2 domain in the interval 884–1127; the sequence is FHWRDLCYDV…MIDYFESKGA (244 aa). An ATP-binding site is contributed by 920 to 927; sequence GASGAGKT. The helical transmembrane segment at 1220-1240 threads the bilayer; that stretch reads YLWSKFILTIFNQVFIGFTFF. The Extracellular portion of the chain corresponds to 1241 to 1312; that stretch reads KADRSLQGLQ…VEIPWNILAG (72 aa). A helical transmembrane segment spans residues 1313-1333; that stretch reads TIAYCIYYYAVGFYANASAAG. The Cytoplasmic portion of the chain corresponds to 1334–1340; it reads QLHERGA. Residues 1341–1361 traverse the membrane as a helical segment; it reads LFWLFSIAFYVYIGSMGLLMI. The Extracellular portion of the chain corresponds to 1362 to 1368; that stretch reads SFNEVAE. The helical transmembrane segment at 1369 to 1389 threads the bilayer; that stretch reads TAAHMGTLLFTMALSFCGVMA. At 1390–1396 the chain is on the cytoplasmic side; the sequence is TPKVMPR. The chain crosses the membrane as a helical span at residues 1397–1417; it reads FWIFMYRVSPLTYMIDALLAL. Residues 1418-1492 lie on the Extracellular side of the membrane; it reads GVANVDVKCS…SSHYYRRWRN (75 aa). Residues 1493–1513 traverse the membrane as a helical segment; the sequence is YGIFICYIAFDYIAATFLYWL. Topologically, residues 1514 to 1529 are cytoplasmic; sequence SRVPKKNGKISEKPKK.

Belongs to the ABC transporter superfamily. ABCG family. PDR (TC 3.A.1.205) subfamily.

The protein localises to the membrane. The sequence is that of ATP-dependent permease PDR15 (PDR15) from Saccharomyces cerevisiae (strain ATCC 204508 / S288c) (Baker's yeast).